A 235-amino-acid chain; its full sequence is Riboflavin kinase (235 aa).

Mg(2+) is bound by residues threonine 45 and asparagine 47. The active-site Nucleophile is the glutamate 140.

Belongs to the flavokinase family. It depends on Zn(2+) as a cofactor. Mg(2+) is required as a cofactor.

The enzyme catalyses riboflavin + ATP = FMN + ADP + H(+). It functions in the pathway cofactor biosynthesis; FMN biosynthesis; FMN from riboflavin (ATP route): step 1/1. In terms of biological role, catalyzes the phosphorylation of riboflavin (vitamin B2) to form flavin mononucleotide (FMN) coenzyme. This Chaetomium globosum (strain ATCC 6205 / CBS 148.51 / DSM 1962 / NBRC 6347 / NRRL 1970) (Soil fungus) protein is Riboflavin kinase (FMN1).